A 410-amino-acid chain; its full sequence is Histone-lysine N-methyltransferase SUV39H2 (410 aa).

The Chromo domain maps to Tyr-47 to Lys-105. Positions Phe-189 to Gly-247 constitute a Pre-SET domain. The Zn(2+) site is built by Cys-191, Cys-193, Cys-196, Cys-201, Cys-202, Cys-229, Cys-233, Cys-235, and Cys-239. The SET domain occupies Tyr-250 to Gln-373. Residues Arg-261–Trp-263, Tyr-304, and Asn-330–His-331 each bind S-adenosyl-L-methionine. Cys-333 contacts Zn(2+). Phosphoserine is present on residues Ser-381, Ser-384, and Ser-388. The region spanning Val-394–Asn-410 is the Post-SET domain. Residues Cys-398, Cys-400, and Cys-405 each contribute to the Zn(2+) site.

Belongs to the class V-like SAM-binding methyltransferase superfamily. Histone-lysine methyltransferase family. Suvar3-9 subfamily. As to quaternary structure, interacts with SMAD5. The large PER complex involved in the histone methylation is composed of at least PER2, CBX3, TRIM28, SUV39H1 and/or SUV39H2; CBX3 mediates the formation of the complex. Ubiquitinated by the DCX(DCAF13) E3 ubiquitin ligase complex, leading to its degradation.

The protein resides in the nucleus. The protein localises to the chromosome. It is found in the centromere. The catalysed reaction is L-lysyl(9)-[histone H3] + 3 S-adenosyl-L-methionine = N(6),N(6),N(6)-trimethyl-L-lysyl(9)-[histone H3] + 3 S-adenosyl-L-homocysteine + 3 H(+). Functionally, histone methyltransferase that specifically trimethylates 'Lys-9' of histone H3 using monomethylated H3 'Lys-9' as substrate. H3 'Lys-9' trimethylation represents a specific tag for epigenetic transcriptional repression by recruiting HP1 (CBX1, CBX3 and/or CBX5) proteins to methylated histones. Mainly functions in heterochromatin regions, thereby playing a central role in the establishment of constitutive heterochromatin at pericentric and telomere regions. H3 'Lys-9' trimethylation is also required to direct DNA methylation at pericentric repeats. SUV39H1 is targeted to histone H3 via its interaction with RB1 and is involved in many processes, such as cell cycle regulation, transcriptional repression and regulation of telomere length. May participate in regulation of higher-order chromatin organization during spermatogenesis. Recruited by the large PER complex to the E-box elements of the circadian target genes such as PER2 itself or PER1, contributes to the conversion of local chromatin to a heterochromatin-like repressive state through H3 'Lys-9' trimethylation. The protein is Histone-lysine N-methyltransferase SUV39H2 (SUV39H2) of Macaca fascicularis (Crab-eating macaque).